A 578-amino-acid polypeptide reads, in one-letter code: A-type ATP synthase subunit A (578 aa).

An ATP-binding site is contributed by 228 to 235 (GPFGSGKT).

It belongs to the ATPase alpha/beta chains family. As to quaternary structure, has multiple subunits with at least A(3), B(3), C, D, E, F, H, I and proteolipid K(x).

The protein resides in the cell membrane. The catalysed reaction is ATP + H2O + 4 H(+)(in) = ADP + phosphate + 5 H(+)(out). In terms of biological role, produces ATP from ADP in the presence of a proton gradient across the membrane. The archaeal alpha chain is a catalytic subunit. Component of the A-type ATP synthase that produces ATP from ADP in the presence of a proton gradient across the membrane. The A chain is the catalytic subunit. The chain is A-type ATP synthase subunit A from Methanosarcina barkeri.